Reading from the N-terminus, the 1103-residue chain is PH, RCC1 and FYVE domains-containing protein 1 (1103 aa).

One can recognise a PH domain in the interval 22–123 (KKGTQLLKYG…IWIGGLKTLI (102 aa)). The disordered stretch occupies residues 144 to 233 (DASRELTSSS…SSSHGSAADD (90 aa)). Low complexity-rich tracts occupy residues 151-169 (SSSP…SSPG) and 217-231 (SVSS…GSAA). RCC1 repeat units lie at residues 237 to 298 (LGDV…FVTR), 299 to 351 (QGEI…AVTL), 353 to 406 (GELY…LITS), 407 to 458 (YGRL…AVVE), 471 to 522 (SGKL…GLTT), 524 to 574 (GQVF…ALTS), and 575 to 626 (RNEV…AICL). The segment at 632–694 (GAEQSQCSTC…VCDSCYVKLS (63 aa)) adopts an FYVE-type zinc-finger fold. Zn(2+)-binding residues include cysteine 638, cysteine 641, cysteine 654, cysteine 657, cysteine 662, cysteine 665, cysteine 686, and cysteine 689. The tract at residues 783–818 (ATPKLAQAPSGISSRSVSPFSRRSSPPRSATPMPST) is disordered. Residues 791–818 (PSGISSRSVSPFSRRSSPPRSATPMPST) are compositionally biased toward low complexity. The stretch at 828–904 (ADNMKKTNEI…IAQLKDVAEK (77 aa)) forms a coiled coil. Positions 962–979 (NLQSPKQTPRASERNSNA) are enriched in polar residues. Positions 962–988 (NLQSPKQTPRASERNSNAYPADPRLSS) are disordered. Residues 1023 to 1078 (AEWIEQYEPGVYITLVALHDGTRDLRRVRFSRRRFGEHQAETWWSENREKVYEKYN) enclose the BRX domain. The segment at 1079–1103 (VRVSEKSTASQTHRDRDEEEEDIPH) is disordered.

Mostly expressed in flowers, and, to a lower extent, in stems, leaves, siliques, seeds.

Binds to phosphatidic acid and to phosphoinositides such as PtdIns3P, PtdIns(3,4)P(2), PtdIns(3,4,5)P(3) and PtdIns(4,5)P(2). Catalyzes guanine nucleotide exchange on specific Rab proteins. The polypeptide is PH, RCC1 and FYVE domains-containing protein 1 (Arabidopsis thaliana (Mouse-ear cress)).